Reading from the N-terminus, the 376-residue chain is Lipoyl synthase 2, mitochondrial (376 aa).

The [4Fe-4S] cluster site is built by C109, C114, C120, C140, C144, C147, and S356. The Radical SAM core domain maps to 125 to 345 (ETGTATATIM…QTLGMEMGFR (221 aa)).

This sequence belongs to the radical SAM superfamily. Lipoyl synthase family. Requires [4Fe-4S] cluster as cofactor.

The protein resides in the mitochondrion. The enzyme catalyses [[Fe-S] cluster scaffold protein carrying a second [4Fe-4S](2+) cluster] + N(6)-octanoyl-L-lysyl-[protein] + 2 oxidized [2Fe-2S]-[ferredoxin] + 2 S-adenosyl-L-methionine + 4 H(+) = [[Fe-S] cluster scaffold protein] + N(6)-[(R)-dihydrolipoyl]-L-lysyl-[protein] + 4 Fe(3+) + 2 hydrogen sulfide + 2 5'-deoxyadenosine + 2 L-methionine + 2 reduced [2Fe-2S]-[ferredoxin]. Its pathway is protein modification; protein lipoylation via endogenous pathway; protein N(6)-(lipoyl)lysine from octanoyl-[acyl-carrier-protein]: step 2/2. In terms of biological role, catalyzes the radical-mediated insertion of two sulfur atoms into the C-6 and C-8 positions of the octanoyl moiety bound to the lipoyl domains of lipoate-dependent enzymes, thereby converting the octanoylated domains into lipoylated derivatives. This is Lipoyl synthase 2, mitochondrial from Pisum sativum (Garden pea).